We begin with the raw amino-acid sequence, 176 residues long: Photosystem I assembly protein Ycf4 (176 aa).

2 consecutive transmembrane segments (helical) span residues 22 to 42 and 48 to 68; these read FVWA…GTAS and LIAF…GLFI.

Belongs to the Ycf4 family.

The protein localises to the plastid thylakoid membrane. In terms of biological role, seems to be required for the assembly of the photosystem I complex. This chain is Photosystem I assembly protein Ycf4, found in Cuscuta gronovii (Common dodder).